The chain runs to 258 residues: Mediator of RNA polymerase II transcription subunit 18 (258 aa).

It belongs to the Mediator complex subunit 18 family. In terms of assembly, component of the Mediator complex.

The protein resides in the nucleus. Component of the Mediator complex, a coactivator involved in the regulated transcription of nearly all RNA polymerase II-dependent genes. Mediator functions as a bridge to convey information from gene-specific regulatory proteins to the basal RNA polymerase II transcription machinery. Mediator is recruited to promoters by direct interactions with regulatory proteins and serves as a scaffold for the assembly of a functional preinitiation complex with RNA polymerase II and the general transcription factors. The protein is Mediator of RNA polymerase II transcription subunit 18 (SRB5) of Eremothecium gossypii (strain ATCC 10895 / CBS 109.51 / FGSC 9923 / NRRL Y-1056) (Yeast).